Consider the following 38-residue polypeptide: Large ribosomal subunit protein bL36 (38 aa).

The protein belongs to the bacterial ribosomal protein bL36 family.

This Methylacidiphilum infernorum (isolate V4) (Methylokorus infernorum (strain V4)) protein is Large ribosomal subunit protein bL36.